Reading from the N-terminus, the 138-residue chain is Enhancer of split malpha protein (138 aa).

This sequence belongs to the M4-like protein family.

Part of the Notch signaling pathway. The protein is Enhancer of split malpha protein of Drosophila melanogaster (Fruit fly).